Consider the following 146-residue polypeptide: Hydroxyproline-rich systemin (146 aa).

The N-terminal stretch at 1–24 (MISFFRAFFLIIIISFLIFVGAQA) is a signal peptide. A propeptide spanning residues 25 to 48 (RTLLGNYHDDEMLIELKLESGNYG) is cleaved from the precursor. The interval 47–128 (YGRTPYKTPP…PPPPKPQDEQ (82 aa)) is disordered. Residues P51, P55, P56, P57, P58, and P63 each carry the 4-hydroxyproline modification. O-linked (Ara...) hydroxyproline glycosylation is found at P51, P55, P56, P57, P58, and P63. Residues 67–70 (EIVN) constitute a propeptide that is removed on maturation. 4-hydroxyproline occurs at positions 79, 80, and 82. P79, P80, and P82 each carry an O-linked (Ara...) hydroxyproline glycan. The propeptide occupies 86-110 (PIIGQLTTITTTPHHDDTVAAPPVG). 4 positions are modified to 4-hydroxyproline: P119, P120, P121, and P122. 4 O-linked (Ara...) hydroxyproline glycosylation sites follow: P119, P120, P121, and P122. The propeptide occupies 131 to 146 (IIITSSSSTLPLQASY).

Post-translationally, O-glycosylated; contains pentose side chains. As to expression, leaves.

The protein localises to the secreted. Functionally, activates a lipid-based signal transduction pathway in which linolenic acid is converted to jasmonic acid, a potent activator of defense gene transcription. Induces synthesis of proteinase inhibitors I and II in leaves when supplied through cut stems. This is Hydroxyproline-rich systemin from Solanum lycopersicum (Tomato).